Consider the following 195-residue polypeptide: Imidazoleglycerol-phosphate dehydratase (195 aa).

The protein belongs to the imidazoleglycerol-phosphate dehydratase family.

Its subcellular location is the cytoplasm. The catalysed reaction is D-erythro-1-(imidazol-4-yl)glycerol 3-phosphate = 3-(imidazol-4-yl)-2-oxopropyl phosphate + H2O. The protein operates within amino-acid biosynthesis; L-histidine biosynthesis; L-histidine from 5-phospho-alpha-D-ribose 1-diphosphate: step 6/9. This chain is Imidazoleglycerol-phosphate dehydratase, found in Thermotoga maritima (strain ATCC 43589 / DSM 3109 / JCM 10099 / NBRC 100826 / MSB8).